The sequence spans 295 residues: Ribosomal protein L11 methyltransferase (295 aa).

Thr-150, Gly-171, Asp-193, and Asn-232 together coordinate S-adenosyl-L-methionine.

Belongs to the methyltransferase superfamily. PrmA family.

The protein resides in the cytoplasm. The catalysed reaction is L-lysyl-[protein] + 3 S-adenosyl-L-methionine = N(6),N(6),N(6)-trimethyl-L-lysyl-[protein] + 3 S-adenosyl-L-homocysteine + 3 H(+). Functionally, methylates ribosomal protein L11. The chain is Ribosomal protein L11 methyltransferase from Neisseria meningitidis serogroup B (strain ATCC BAA-335 / MC58).